Here is a 156-residue protein sequence, read N- to C-terminus: MSRRHAAEKREVLPDPKFGNIVVTKFMNSVMYAGKKSVAERIVYGALDLIEAKTKQPPLGVFEQALDNVMPAIEVRSRRVGGATYQVPVEVRSTRRQALGIRWLITAARGRNEKTMTERLSAELLDASNNRGNAVKKREDVHKMAEANRAFSHYRW.

The protein belongs to the universal ribosomal protein uS7 family. Part of the 30S ribosomal subunit. Contacts proteins S9 and S11.

Its function is as follows. One of the primary rRNA binding proteins, it binds directly to 16S rRNA where it nucleates assembly of the head domain of the 30S subunit. Is located at the subunit interface close to the decoding center, probably blocks exit of the E-site tRNA. In Rhodopseudomonas palustris (strain BisB5), this protein is Small ribosomal subunit protein uS7.